Reading from the N-terminus, the 673-residue chain is Annexin A6 (673 aa).

The residue at position 2 (Ala-2) is an N-acetylalanine. Ser-13 is modified (phosphoserine). 8 Annexin repeats span residues 20–91, 92–163, 175–247, 251–322, 363–434, 435–506, 521–595, and 599–670; these read FDAN…NLMR, PLAY…VLLQ, DLVQ…AVVK, STPE…KLCG, FNPD…GLMM, PPAH…SLAT, EDAQ…AIVQ, and NKPL…ALCG. The residue at position 30 (Tyr-30) is a Phosphotyrosine. Residues Lys-63, Lys-68, Lys-75, and Lys-81 each carry the N6-acetyllysine modification. The residue at position 201 (Tyr-201) is a Phosphotyrosine. 3 positions are modified to N6-acetyllysine: Lys-306, Lys-370, and Lys-418. Ser-422 carries the phosphoserine modification. Position 483 is an N6-acetyllysine (Lys-483). Position 537 is a phosphoserine (Ser-537). Lys-620 is modified (N6-acetyllysine).

It belongs to the annexin family.

It localises to the cytoplasm. Its subcellular location is the melanosome. Functionally, may associate with CD21. May regulate the release of Ca(2+) from intracellular stores. This is Annexin A6 (Anxa6) from Rattus norvegicus (Rat).